A 380-amino-acid polypeptide reads, in one-letter code: Cytochrome b (380 aa).

4 consecutive transmembrane segments (helical) span residues 34–54, 78–99, 114–134, and 179–199; these read FGSL…LLAM, WLIR…YLHI, WNTG…GYVL, and FFAL…IHLT. Positions 84 and 98 each coordinate heme b. Heme b contacts are provided by histidine 183 and histidine 197. Residue histidine 202 participates in a ubiquinone binding. Helical transmembrane passes span 227–247, 289–309, 321–341, and 348–368; these read LKDF…ALFT, LGGV…PFLH, LSQT…WIGS, and FITI…ILFP.

It belongs to the cytochrome b family. As to quaternary structure, the cytochrome bc1 complex contains 11 subunits: 3 respiratory subunits (MT-CYB, CYC1 and UQCRFS1), 2 core proteins (UQCRC1 and UQCRC2) and 6 low-molecular weight proteins (UQCRH/QCR6, UQCRB/QCR7, UQCRQ/QCR8, UQCR10/QCR9, UQCR11/QCR10 and a cleavage product of UQCRFS1). This cytochrome bc1 complex then forms a dimer. Heme b is required as a cofactor.

Its subcellular location is the mitochondrion inner membrane. Component of the ubiquinol-cytochrome c reductase complex (complex III or cytochrome b-c1 complex) that is part of the mitochondrial respiratory chain. The b-c1 complex mediates electron transfer from ubiquinol to cytochrome c. Contributes to the generation of a proton gradient across the mitochondrial membrane that is then used for ATP synthesis. The chain is Cytochrome b (MT-CYB) from Coracias caudatus (Lilac-breasted roller).